The chain runs to 503 residues: MPDVKESVPPKYPGDSEGRSCKPETSGPPQEDKSGSEDPPPFLSVTGLTETVNEVSKLSNKIGMNCDYYMEEKVLPPSSLEGKVKETVHNAFWDHLKEQLSATPPDFSCALELLKEIKEILLSLLLPRQNRLRIEIEEALDMDLLKQEAEHGALKVLYLSKYVLNMMALLCAPVRDEAVQKLENITDPVWLLRGIFQVLGRMKMDMVNYTIQSLQPHLQEHSIQYERAKFQELLNKQPSLLNHTTKWLTQAAGDLTMSPPTCPDTSDSSSVAGPSPNEAANNPEPLSPTMVLCQGFLNLLLWDLENEEFPETLLMDRTRLQELKSQLHQLTVMASVLLVASSFSGSVLFGSPQFVDKLKRITKSLLEDFHSRPEEAILTVSEQVSQEIHQSLKNMGLVALSSDNTASLMGQLQNIAKKENCVCSVIDQRIHLFLKCCLVLGVQRSLLDLPGGLTLIEAELAELGQKFVNLTHHNQQVFGPYYTEILKTLISPAQALETKVESV.

Over residues 1 to 22 the composition is skewed to basic and acidic residues; sequence MPDVKESVPPKYPGDSEGRSCK. 2 disordered regions span residues 1–42 and 254–285; these read MPDV…PPPF and DLTM…NPEP. Residues 263 to 285 are compositionally biased toward low complexity; the sequence is PDTSDSSSVAGPSPNEAANNPEP. A helical transmembrane segment spans residues 330-349; the sequence is LTVMASVLLVASSFSGSVLF.

It belongs to the TCP11 family. Found in a complex at least composed of MROH2B, PRKACA isoform 2 and TCP11. Interacts with MROH2B. Interacts with PRKACA isoform 2. Isoform 2 and isoform 3 interact with ODF1 (via leucine zipper motif). In terms of processing, constitutively phosphorylated on serine, threonine and tyrosine residues within the head and tail regions of noncapacitated spermatozoa. Phosphorylation on tyrosine residues increases upon sperm capacitation within the acrosomal region in a protein kinase A (PKA)-dependent signaling pathway. Isoform 2 and isoform 3 are expressed in sperm. Isoform 1 is not detected in sperm (at protein level). Testis-specific. Isoform 1, isoform 2 and isoform 3 are expressed in sperm.

It is found in the membrane. The protein localises to the cell projection. The protein resides in the cilium. It localises to the flagellum. Its subcellular location is the cytoplasmic vesicle. It is found in the secretory vesicle. The protein localises to the acrosome. Plays a role in the process of sperm capacitation and acrosome reactions. Probable receptor for the putative fertilization-promoting peptide (FPP) at the sperm membrane that may modulate the activity of the adenylyl cyclase cAMP pathway. The polypeptide is T-complex protein 11 homolog (TCP11) (Homo sapiens (Human)).